The following is a 344-amino-acid chain: GTP 3',8-cyclase (344 aa).

The 226-residue stretch at 19–244 (PFARPITYLR…TPLAERTGGP (226 aa)) folds into the Radical SAM core domain. Position 28 (Arg28) interacts with GTP. 2 residues coordinate [4Fe-4S] cluster: Cys35 and Cys39. An S-adenosyl-L-methionine-binding site is contributed by Tyr41. Cys42 contributes to the [4Fe-4S] cluster binding site. Position 77 (Arg77) interacts with GTP. Gly81 lines the S-adenosyl-L-methionine pocket. GTP is bound at residue Thr110. Ser134 contributes to the S-adenosyl-L-methionine binding site. GTP is bound at residue Lys170. Met204 contributes to the S-adenosyl-L-methionine binding site. [4Fe-4S] cluster-binding residues include Cys268 and Cys271. 273–275 (RVR) is a GTP binding site. Cys285 provides a ligand contact to [4Fe-4S] cluster.

This sequence belongs to the radical SAM superfamily. MoaA family. As to quaternary structure, monomer and homodimer. Requires [4Fe-4S] cluster as cofactor.

It carries out the reaction GTP + AH2 + S-adenosyl-L-methionine = (8S)-3',8-cyclo-7,8-dihydroguanosine 5'-triphosphate + 5'-deoxyadenosine + L-methionine + A + H(+). It participates in cofactor biosynthesis; molybdopterin biosynthesis. Its function is as follows. Catalyzes the cyclization of GTP to (8S)-3',8-cyclo-7,8-dihydroguanosine 5'-triphosphate. This chain is GTP 3',8-cyclase, found in Paracoccus denitrificans (strain Pd 1222).